We begin with the raw amino-acid sequence, 544 residues long: Chaperonin GroEL (544 aa).

Residues 30 to 33 (TLGP), Lys51, 87 to 91 (DGTTT), Gly415, and Asp495 each bind ATP.

Belongs to the chaperonin (HSP60) family. As to quaternary structure, forms a cylinder of 14 subunits composed of two heptameric rings stacked back-to-back. Interacts with the co-chaperonin GroES.

Its subcellular location is the cytoplasm. It catalyses the reaction ATP + H2O + a folded polypeptide = ADP + phosphate + an unfolded polypeptide.. Functionally, together with its co-chaperonin GroES, plays an essential role in assisting protein folding. The GroEL-GroES system forms a nano-cage that allows encapsulation of the non-native substrate proteins and provides a physical environment optimized to promote and accelerate protein folding. This Aeromonas salmonicida protein is Chaperonin GroEL.